A 252-amino-acid chain; its full sequence is Protein AGAMOUS-LIKE 6 (252 aa).

The MADS-box domain maps to 1–61; that stretch reads MGRGRVELKR…GKLYEFGSAG (61 aa). 2 consecutive short sequence motifs (nuclear localization signal) follow at residues 8–15 and 138–145; these read LKRIENKI and QRKTQIMM. The K-box domain maps to 85 to 175; sequence TQSWYQEVSK…KIKVSLELSS (91 aa).

As to expression, restricted to flowers.

The protein resides in the nucleus. In terms of biological role, probable transcription factor involved in fruit development. Key regulator of the transition between the state of 'ovary arrest' imposed towards anthesis and the fertilization-triggered fruit set. This Solanum lycopersicum (Tomato) protein is Protein AGAMOUS-LIKE 6.